The sequence spans 648 residues: MSESKVYPVKAHISNGALLDKAGYEAMYRASVQDPDAFWGEQGKIIDWMKPYTKVKNTSYDPGHVSIKWYEDGLLNVSANCLDRHLAQRGDKVAIIWEGDNPAEDRKLTYRELHAEVCKFSNVLKAQGVHRGDVVCLYMPMVPEAAIAMLACTRIGAVHSIVFGGFSPEALAGRIIDSGSSIVITADEGLRGGRPVPLKKNVDEALTNPDTRVSKVIVLKRTGGNVAWHNHRDIWWHEATAAASSDCPPEAMNAEDPLFVLYTSGSTGKPKGVLHTTGGYLVYATLTFKYVFDYHEEDIYWCTADVGWVTGHSYLVYGPLANGATTIMFEGVPNYPATNRMSQVVDKHQVTILYTAPTAIRALMAKGRDAVEGTSRQSLRIMGSVGEPINPEAWEWYYRTIGEERCPIVDTWWQTETGGILISPLPGVTDLKPGSATRPFFGVQPALVDNMGEPLEGATEGNLVITDSWPGQMRTVFGDHERFEQTYFSTFPGRYFTGDGARRDEDGYYWITGRVDDVLNVSGHRMGTAEIESALVAHPKIAEAAVVGVPHEIKGQGIYAYVTLIAGEEPSRELHKEVKEWVRKEIGAIATPDVIHWAEGLPKTRSGKIMRRILRKIATGETDSLGDISTLADPGVVDKLIREKSEAA.

Residues 191–194 (RGGR), T310, and N334 each bind CoA. Residues 386–388 (GEP), 410–415 (DTWWQT), D499, and R514 each bind ATP. S522 is a binding site for CoA. R525 contacts ATP. Positions 536, 538, and 541 each coordinate Mg(2+). Residue R583 coordinates CoA. K608 bears the N6-acetyllysine mark.

This sequence belongs to the ATP-dependent AMP-binding enzyme family. The cofactor is Mg(2+). Acetylated. Deacetylation by the SIR2-homolog deacetylase activates the enzyme.

The catalysed reaction is acetate + ATP + CoA = acetyl-CoA + AMP + diphosphate. Its function is as follows. Catalyzes the conversion of acetate into acetyl-CoA (AcCoA), an essential intermediate at the junction of anabolic and catabolic pathways. AcsA undergoes a two-step reaction. In the first half reaction, AcsA combines acetate with ATP to form acetyl-adenylate (AcAMP) intermediate. In the second half reaction, it can then transfer the acetyl group from AcAMP to the sulfhydryl group of CoA, forming the product AcCoA. The protein is Acetyl-coenzyme A synthetase of Aeromonas salmonicida (strain A449).